Here is a 129-residue protein sequence, read N- to C-terminus: Large ribosomal subunit protein bL12 (129 aa).

It belongs to the bacterial ribosomal protein bL12 family. In terms of assembly, homodimer. Part of the ribosomal stalk of the 50S ribosomal subunit. Forms a multimeric L10(L12)X complex, where L10 forms an elongated spine to which 2 to 4 L12 dimers bind in a sequential fashion. Binds GTP-bound translation factors.

Forms part of the ribosomal stalk which helps the ribosome interact with GTP-bound translation factors. Is thus essential for accurate translation. This Pseudothermotoga lettingae (strain ATCC BAA-301 / DSM 14385 / NBRC 107922 / TMO) (Thermotoga lettingae) protein is Large ribosomal subunit protein bL12.